The following is an 811-amino-acid chain: Probable glutamine--tRNA ligase (811 aa).

Positions 190–217 are disordered; that stretch reads DAAAGKKKGAKAKNSKQKTVDSGKAKEQ. Positions 194–205 are enriched in basic residues; sequence GKKKGAKAKNSK. Positions 207–217 are enriched in basic and acidic residues; sequence KTVDSGKAKEQ. The 'HIGH' region signature appears at 269–279; sequence PEPNGYLHIGH. ATP contacts are provided by residues 270-272 and 276-282; these read EPN and HIGHSKA. Positions 302 and 447 each coordinate L-glutamine. Residues T466, 495 to 496, and 503 to 505 each bind ATP; these read RL and MSK. Positions 502 to 506 match the 'KMSKS' region motif; sequence LMSKR.

Belongs to the class-I aminoacyl-tRNA synthetase family.

The protein resides in the cytoplasm. It catalyses the reaction tRNA(Gln) + L-glutamine + ATP = L-glutaminyl-tRNA(Gln) + AMP + diphosphate. This is Probable glutamine--tRNA ligase (qrs1) from Schizosaccharomyces pombe (strain 972 / ATCC 24843) (Fission yeast).